A 401-amino-acid polypeptide reads, in one-letter code: Beta-ketoadipyl-CoA thiolase (401 aa).

Cys90 functions as the Acyl-thioester intermediate in the catalytic mechanism. Residues His357 and Cys387 each act as proton acceptor in the active site.

This sequence belongs to the thiolase-like superfamily. Thiolase family.

The catalysed reaction is succinyl-CoA + acetyl-CoA = 3-oxoadipyl-CoA + CoA. It participates in aromatic compound metabolism; phenylacetate degradation. In terms of biological role, catalyzes thiolytic cleavage of beta-ketoadipyl-CoA to succinyl-CoA and acetyl-CoA. This chain is Beta-ketoadipyl-CoA thiolase (paaJ), found in Escherichia coli.